The following is a 584-amino-acid chain: Probable pectinesterase/pectinesterase inhibitor (584 aa).

The signal sequence occupies residues 1 to 22 (MAVGKIVISVASMLLVVGVAIG). The tract at residues 40–191 (NSHQKAVESL…KILSSNAIDI (152 aa)) is pectinesterase inhibitor. N-linked (GlcNAc...) asparagine glycosylation is found at asparagine 91 and asparagine 105. A disordered region spans residues 246–267 (AQAGRPGAPADEGIGEGGGGGG). Positions 272 to 571 (THVVAKDGSG…TVANWLTPAN (300 aa)) are pectinesterase. Positions 349 and 379 each coordinate substrate. Aspartate 402 serves as the catalytic Proton donor; for pectinesterase activity. The active-site Nucleophile; for pectinesterase activity is aspartate 423. 2 residues coordinate substrate: arginine 492 and tryptophan 494.

The protein in the N-terminal section; belongs to the PMEI family. This sequence in the C-terminal section; belongs to the pectinesterase family. As to expression, pollen, and at much lower levels in pistils and petals.

The protein localises to the secreted. It is found in the cell wall. It catalyses the reaction [(1-&gt;4)-alpha-D-galacturonosyl methyl ester](n) + n H2O = [(1-&gt;4)-alpha-D-galacturonosyl](n) + n methanol + n H(+). Its pathway is glycan metabolism; pectin degradation; 2-dehydro-3-deoxy-D-gluconate from pectin: step 1/5. Its function is as follows. Acts in the modification of cell walls via demethylesterification of cell wall pectin. This Brassica napus (Rape) protein is Probable pectinesterase/pectinesterase inhibitor (BP19).